Consider the following 179-residue polypeptide: NAD(P)H-quinone oxidoreductase subunit I, chloroplastic (179 aa).

2 4Fe-4S ferredoxin-type domains span residues 55 to 84 (GRIHFEFDKCIACEVCVRVCPIDLPVVDWR) and 95 to 124 (LNYSIDFGICIFCGNCVEYCPTNCLSMTEE). The [4Fe-4S] cluster site is built by C64, C67, C70, C74, C104, C107, C110, and C114.

The protein belongs to the complex I 23 kDa subunit family. As to quaternary structure, NDH is composed of at least 16 different subunits, 5 of which are encoded in the nucleus. Requires [4Fe-4S] cluster as cofactor.

Its subcellular location is the plastid. The protein localises to the chloroplast thylakoid membrane. The enzyme catalyses a plastoquinone + NADH + (n+1) H(+)(in) = a plastoquinol + NAD(+) + n H(+)(out). The catalysed reaction is a plastoquinone + NADPH + (n+1) H(+)(in) = a plastoquinol + NADP(+) + n H(+)(out). Functionally, NDH shuttles electrons from NAD(P)H:plastoquinone, via FMN and iron-sulfur (Fe-S) centers, to quinones in the photosynthetic chain and possibly in a chloroplast respiratory chain. The immediate electron acceptor for the enzyme in this species is believed to be plastoquinone. Couples the redox reaction to proton translocation, and thus conserves the redox energy in a proton gradient. The sequence is that of NAD(P)H-quinone oxidoreductase subunit I, chloroplastic from Nymphaea alba (White water-lily).